Here is a 136-residue protein sequence, read N- to C-terminus: Large ribosomal subunit protein uL16c (136 aa).

The protein belongs to the universal ribosomal protein uL16 family. As to quaternary structure, part of the 50S ribosomal subunit.

The protein resides in the plastid. Its subcellular location is the chloroplast. This chain is Large ribosomal subunit protein uL16c, found in Citrus sinensis (Sweet orange).